Reading from the N-terminus, the 124-residue chain is UPF0102 protein HEAR0176 (124 aa).

Belongs to the UPF0102 family.

The sequence is that of UPF0102 protein HEAR0176 from Herminiimonas arsenicoxydans.